The following is a 120-amino-acid chain: Large ribosomal subunit protein uL18 (120 aa).

Belongs to the universal ribosomal protein uL18 family. As to quaternary structure, part of the 50S ribosomal subunit; part of the 5S rRNA/L5/L18/L25 subcomplex. Contacts the 5S and 23S rRNAs.

In terms of biological role, this is one of the proteins that bind and probably mediate the attachment of the 5S RNA into the large ribosomal subunit, where it forms part of the central protuberance. The chain is Large ribosomal subunit protein uL18 from Gluconacetobacter diazotrophicus (strain ATCC 49037 / DSM 5601 / CCUG 37298 / CIP 103539 / LMG 7603 / PAl5).